Reading from the N-terminus, the 172-residue chain is Small ribosomal subunit protein uS5 (172 aa).

The region spanning 17-80 is the S5 DRBM domain; the sequence is LREKMISVNR…DEARRKMVKV (64 aa).

This sequence belongs to the universal ribosomal protein uS5 family. Part of the 30S ribosomal subunit. Contacts proteins S4 and S8.

With S4 and S12 plays an important role in translational accuracy. Its function is as follows. Located at the back of the 30S subunit body where it stabilizes the conformation of the head with respect to the body. The chain is Small ribosomal subunit protein uS5 from Cupriavidus taiwanensis (strain DSM 17343 / BCRC 17206 / CCUG 44338 / CIP 107171 / LMG 19424 / R1) (Ralstonia taiwanensis (strain LMG 19424)).